Here is a 270-residue protein sequence, read N- to C-terminus: uncharacterized protein (270 aa).

This is an uncharacterized protein from Bacillus anthracis.